The following is a 256-amino-acid chain: Thiazole synthase (256 aa).

The Schiff-base intermediate with DXP role is filled by lysine 95. 1-deoxy-D-xylulose 5-phosphate contacts are provided by residues glycine 156, alanine 182–glycine 183, and asparagine 204–threonine 205.

This sequence belongs to the ThiG family. Homotetramer. Forms heterodimers with either ThiH or ThiS.

It localises to the cytoplasm. It carries out the reaction [ThiS sulfur-carrier protein]-C-terminal-Gly-aminoethanethioate + 2-iminoacetate + 1-deoxy-D-xylulose 5-phosphate = [ThiS sulfur-carrier protein]-C-terminal Gly-Gly + 2-[(2R,5Z)-2-carboxy-4-methylthiazol-5(2H)-ylidene]ethyl phosphate + 2 H2O + H(+). It functions in the pathway cofactor biosynthesis; thiamine diphosphate biosynthesis. Functionally, catalyzes the rearrangement of 1-deoxy-D-xylulose 5-phosphate (DXP) to produce the thiazole phosphate moiety of thiamine. Sulfur is provided by the thiocarboxylate moiety of the carrier protein ThiS. In vitro, sulfur can be provided by H(2)S. The polypeptide is Thiazole synthase (Cronobacter sakazakii (strain ATCC BAA-894) (Enterobacter sakazakii)).